Consider the following 1057-residue polypeptide: DNA-directed RNA polymerase subunit beta' (1057 aa).

The Zn(2+) site is built by Cys-60, Cys-62, Cys-75, and Cys-78. Mg(2+)-binding residues include Asp-449, Asp-451, and Asp-453. Zn(2+) is bound by residues Cys-822, Cys-896, Cys-903, and Cys-906.

This sequence belongs to the RNA polymerase beta' chain family. In terms of assembly, the RNAP catalytic core consists of 2 alpha, 1 beta, 1 beta' and 1 omega subunit. When a sigma factor is associated with the core the holoenzyme is formed, which can initiate transcription. Mg(2+) serves as cofactor. The cofactor is Zn(2+).

The enzyme catalyses RNA(n) + a ribonucleoside 5'-triphosphate = RNA(n+1) + diphosphate. In terms of biological role, DNA-dependent RNA polymerase catalyzes the transcription of DNA into RNA using the four ribonucleoside triphosphates as substrates. This chain is DNA-directed RNA polymerase subunit beta', found in Staphylococcus aureus.